A 112-amino-acid chain; its full sequence is Small ribosomal subunit protein bS6 (112 aa).

The protein belongs to the bacterial ribosomal protein bS6 family.

Its function is as follows. Binds together with bS18 to 16S ribosomal RNA. The protein is Small ribosomal subunit protein bS6 of Legionella pneumophila (strain Paris).